Reading from the N-terminus, the 1039-residue chain is Integrin alpha-4 (1039 aa).

An N-terminal signal peptide occupies residues 1-40 (MFSTKSAWLRNGGADQGPRGIALREAVMLLLYFGVPTGPS). Residues 41-983 (YNLDPENALL…LHHQRPKRHF (943 aa)) are Extracellular-facing. FG-GAP repeat units follow at residues 42–107 (NLDP…PNQT), 117–184 (SGEP…TELS), 193–244 (DYTR…QYKA), 246–298 (VDRQ…ENEL), 299–358 (NIVY…GAVM), 362–419 (ERVL…GISS), and 423–485 (QRIE…HPES). N-linked (GlcNAc...) asparagine glycans are attached at residues N86, N105, and N145. C98 and C108 form a disulfide bridge. Disulfide bonds link C151/C172 and C190/C205. N236 carries an N-linked (GlcNAc...) asparagine glycan. The Ca(2+) site is built by D321, N323, D325, D329, D384, D386, D388, D392, D446, D448, N450, Y452, and D454. N487 is a glycosylation site (N-linked (GlcNAc...) asparagine). Intrachain disulfides connect C493–C502 and C508–C564. 2 N-linked (GlcNAc...) asparagine glycosylation sites follow: N525 and N545. The SG1 motif lies at 613 to 623 (KKEKDVIRKMI). C629 and C634 are oxidised to a cystine. N633, N652, and N667 each carry an N-linked (GlcNAc...) asparagine glycan. C705 and C718 are joined by a disulfide. Residues N813 and N828 are each glycosylated (N-linked (GlcNAc...) asparagine). 2 disulfide bridges follow: C859–C897 and C904–C909. A helical membrane pass occupies residues 984-1007 (TIIIITISLLLGLIVLLLISCVMW). Over 1008–1039 (KAGFFKRQYKSILQEENRRDSWSYVNSKSNDD) the chain is Cytoplasmic. Residues 1010–1014 (GFFKR) carry the GFFKR motif motif. Residue S1028 is modified to Phosphoserine.

This sequence belongs to the integrin alpha chain family. As to quaternary structure, heterodimer of an alpha and a beta subunit. The alpha subunit can sometimes be cleaved into two non-covalently associated fragments. Alpha-4 associates with either beta-1 or beta-7. Alpha-4 interacts with PXN, LPXN, and TGFB1I1/HIC5. Interacts with CSPG4 through CSPG4 chondroitin sulfate glycosaminoglycan. Interacts with JAML; integrin alpha-4/beta-1 may regulate leukocyte to endothelial cells adhesion by controlling JAML homodimerization. ITGA4:ITGB1 is found in a ternary complex with CX3CR1 and CX3CL1. Interacts with MDK. ITGA4:ITGB1 interacts with MDK; this interaction mediates MDK-induced osteoblast cells migration through PXN phosphorylation. Integrin ITGA4:ITGB1 interacts with SVEP1 (via Sushi domain 21); thereby inhibits Ca(2+) intracellular signaling and as a result represses vasocontraction. ITGA4:ITGB1 interacts with SELP. ITGA4:ITGB1 interacts with BCAM. Phosphorylation on Ser-1028 inhibits PXN binding. As to expression, expressed in the media layer of the arterial wall (at protein level). Weakly expression in the thymus, spleen and mesenteric lymph nodes.

The protein resides in the membrane. Functionally, integrins alpha-4/beta-1 (VLA-4 or LPAM-2) and alpha-4/beta-7 (LPAM-1) are receptors for fibronectin. They recognize one or more domains within the alternatively spliced CS-1 and CS-5 regions of fibronectin. They are also receptors for VCAM1. Integrin alpha-4/beta-1 recognizes the sequence Q-I-D-S in VCAM1. Integrin alpha-4/beta-7 is also a receptor for MADCAM1. It recognizes the sequence L-D-T in MADCAM1. On activated endothelial cells integrin VLA-4 triggers homotypic aggregation for most VLA-4-positive leukocyte cell lines. It may also participate in cytolytic T-cell interactions with target cells. ITGA4:ITGB1 binds to fractalkine (CX3CL1) and may act as its coreceptor in CX3CR1-dependent fractalkine signaling. ITGA4:ITGB1 binds to PLA2G2A via a site (site 2) which is distinct from the classical ligand-binding site (site 1) and this induces integrin conformational changes and enhanced ligand binding to site 1. Integrin ITGA4:ITGB1 represses PRKCA-mediated L-type voltage-gated channel Ca(2+) influx and ROCK-mediated calcium sensitivity in vascular smooth muscle cells via its interaction with SVEP1, thereby inhibiting vasocontraction. The protein is Integrin alpha-4 (Itga4) of Mus musculus (Mouse).